We begin with the raw amino-acid sequence, 94 residues long: Putative pterin-4-alpha-carbinolamine dehydratase (94 aa).

This sequence belongs to the pterin-4-alpha-carbinolamine dehydratase family.

The enzyme catalyses (4aS,6R)-4a-hydroxy-L-erythro-5,6,7,8-tetrahydrobiopterin = (6R)-L-erythro-6,7-dihydrobiopterin + H2O. The protein is Putative pterin-4-alpha-carbinolamine dehydratase of Mycolicibacterium smegmatis (strain ATCC 700084 / mc(2)155) (Mycobacterium smegmatis).